The primary structure comprises 231 residues: Adenylate kinase (231 aa).

Residue 12–17 (GAGKGT) coordinates ATP. Residues 32–61 (STGDMLRAAVKAKTPLGLEVKKIMESGGLV) are NMP. AMP-binding positions include threonine 33, arginine 38, 59–61 (GLV), 87–90 (GFPR), and glutamine 94. Residues 124 to 161 (GRLIHPASGRTYHRRYNPPKVADKDDVTGEPLIQRADD) form an LID region. Residues arginine 125 and 134 to 135 (TY) contribute to the ATP site. AMP is bound by residues arginine 158 and arginine 169. Glycine 205 serves as a coordination point for ATP.

This sequence belongs to the adenylate kinase family. As to quaternary structure, monomer.

It is found in the cytoplasm. The enzyme catalyses AMP + ATP = 2 ADP. It functions in the pathway purine metabolism; AMP biosynthesis via salvage pathway; AMP from ADP: step 1/1. Its function is as follows. Catalyzes the reversible transfer of the terminal phosphate group between ATP and AMP. Plays an important role in cellular energy homeostasis and in adenine nucleotide metabolism. In Coxiella burnetii (strain CbuK_Q154) (Coxiella burnetii (strain Q154)), this protein is Adenylate kinase.